The chain runs to 66 residues: DNA-directed RNA polymerase subunit Rpo10 (66 aa).

Positions 7, 10, 44, and 45 each coordinate Zn(2+).

The protein belongs to the archaeal Rpo10/eukaryotic RPB10 RNA polymerase subunit family. In terms of assembly, part of the RNA polymerase complex. Zn(2+) serves as cofactor.

The protein localises to the cytoplasm. The enzyme catalyses RNA(n) + a ribonucleoside 5'-triphosphate = RNA(n+1) + diphosphate. Its function is as follows. DNA-dependent RNA polymerase (RNAP) catalyzes the transcription of DNA into RNA using the four ribonucleoside triphosphates as substrates. The sequence is that of DNA-directed RNA polymerase subunit Rpo10 from Saccharolobus islandicus (strain Y.N.15.51 / Yellowstone #2) (Sulfolobus islandicus).